The sequence spans 511 residues: MGDWSFLGRLLENAQEHSTVIGKVWLTVLFIFRILVLGAAAEEVWGDEQSDFTCNTQQPGCENVCYDKAFPISHIRFWVLQIIFVSTPTLIYLGHVLHIVRMEEKRKEKEEELKKRGSVKDNNYPGAATSGGGSGGGNNFKDPPIKMGKEKLPIRDERGRIRMGGALLRTYIFNIIFKTLFEVGFIVGQYFLYGFELKPVYQCSRPPCPHTVDCFISRPTEKTIFIIFMLVVASVSLLLNMLEIYHLGWKKLKQGMTSQYSLEMPVTTLTPVMVTGESKPVSLPPPAPPVVVTTTAPAPVLPDTRAVTPLLAPVTMAPYYAAAAPRTRPPSNTASMASYPVAPPVPENRHRAVTPTPVSTPVTIPTPIPTPTPAIINYFNSKSNALAAEQNWVNMAAEQQGKAPSSSAGSSTPSSVRHPLPEQEEPLEQLLPLPAGPPITTTNSGSSTSLSGASGSKWDVEGEEELAEERPISATCTTVEMHEPPLLVDTRRLSRASKSSSSRARSDDLAV.

Residues 2 to 15 (GDWSFLGRLLENAQ) lie within the membrane without spanning it. At 16-19 (EHST) the chain is on the cytoplasmic side. The chain crosses the membrane as a helical span at residues 20–40 (VIGKVWLTVLFIFRILVLGAA). Residues 41 to 71 (AEEVWGDEQSDFTCNTQQPGCENVCYDKAFP) lie on the Extracellular side of the membrane. Intrachain disulfides connect cysteine 54–cysteine 214, cysteine 61–cysteine 208, and cysteine 65–cysteine 203. A helical transmembrane segment spans residues 72–92 (ISHIRFWVLQIIFVSTPTLIY). Residues 93 to 174 (LGHVLHIVRM…GALLRTYIFN (82 aa)) lie on the Cytoplasmic side of the membrane. Residues 110 to 119 (EEELKKRGSV) are compositionally biased toward basic and acidic residues. Residues 110-143 (EEELKKRGSVKDNNYPGAATSGGGSGGGNNFKDP) are disordered. Gly residues predominate over residues 129-138 (TSGGGSGGGN). A helical transmembrane segment spans residues 175–195 (IIFKTLFEVGFIVGQYFLYGF). The Extracellular portion of the chain corresponds to 196–223 (ELKPVYQCSRPPCPHTVDCFISRPTEKT). Residues 224–244 (IFIIFMLVVASVSLLLNMLEI) traverse the membrane as a helical segment. The Cytoplasmic portion of the chain corresponds to 245–511 (YHLGWKKLKQ…SRARSDDLAV (267 aa)). Residues 397 to 511 (AEQQGKAPSS…SRARSDDLAV (115 aa)) form a disordered region. 2 stretches are compositionally biased toward low complexity: residues 403-415 (APSSSAGSSTPSS) and 440-456 (TTTNSGSSTSLSGASGS).

This sequence belongs to the connexin family. A hemichannel or connexon is composed of a hexamer of connexins. A functional gap junction is formed by the apposition of two hemichannels. During early stages of lens development, interacts with the C-terminus of MIP. In terms of tissue distribution, detected in eye lens.

The protein localises to the cell membrane. The protein resides in the cell junction. It is found in the gap junction. In terms of biological role, structural component of lens fiber gap junctions. Gap junctions are dodecameric channels that connect the cytoplasm of adjoining cells. They are formed by the docking of two hexameric hemichannels, one from each cell membrane. Small molecules and ions diffuse from one cell to a neighboring cell via the central pore. In Gallus gallus (Chicken), this protein is Gap junction alpha-3 protein (GJA3).